The primary structure comprises 119 residues: Lamprin 1.8-10 (119 aa).

A signal peptide spans 1 to 19; sequence MAATMQALLVIALLHLATA. Repeat copies occupy residues 41-45, 46-50, 51-55, 56-60, 61-65, 66-70, and 86-90. Residues 41 to 90 are 7 X 5 AA approximate repeats; the sequence is GGLGYGGLGYGGLGYGGLGVAGLGYGGLGYPGAALGGAYTHHAALGGLGY.

As to quaternary structure, the polymeric lamprin chains self-aggregate to form fibers and have secondary structures particularly rich in beta-sheets and in beta-turns.

It is found in the secreted. The protein localises to the extracellular space. It localises to the extracellular matrix. In terms of biological role, self-aggregating protein that is part of the soluble form of lamprin. This chain is Lamprin 1.8-10, found in Petromyzon marinus (Sea lamprey).